Consider the following 403-residue polypeptide: Probable eukaryotic initiation factor 4A (403 aa).

Residues 1–29 (MSQQDRVAPQDQDSFLDDQPGVRPIPSFD) form a disordered region. Positions 26-54 (PSFDDMPLHQNLLRGIYSYGFEKPSSIQQ) match the Q motif motif. One can recognise a Helicase ATP-binding domain in the interval 57–230 (IAPFTRGGDI…KKFMRDPVRI (174 aa)). 70–77 (AQSGTGKT) is a binding site for ATP. Positions 178 to 181 (DEAD) match the DEAD box motif. One can recognise a Helicase C-terminal domain in the interval 241-401 (GIKQFFIAVE…ELPVDFAAYL (161 aa)).

Belongs to the DEAD box helicase family. eIF4A subfamily. As to quaternary structure, eIF4F is a multi-subunit complex, the composition of which varies with external and internal environmental conditions. It is composed of at least EIF4A, EIF4E and EIF4G.

The catalysed reaction is ATP + H2O = ADP + phosphate + H(+). In terms of biological role, ATP-dependent RNA helicase which is a subunit of the eIF4F complex involved in cap recognition and is required for mRNA binding to ribosome. In the current model of translation initiation, eIF4A unwinds RNA secondary structures in the 5'-UTR of mRNAs which is necessary to allow efficient binding of the small ribosomal subunit, and subsequent scanning for the initiator codon. The polypeptide is Probable eukaryotic initiation factor 4A (Leishmania braziliensis).